Reading from the N-terminus, the 500-residue chain is Glycerol kinase (500 aa).

Threonine 12 provides a ligand contact to ADP. ATP-binding residues include threonine 12, threonine 13, and serine 14. Residue threonine 12 coordinates sn-glycerol 3-phosphate. Arginine 16 is a binding site for ADP. Arginine 82, glutamate 83, tyrosine 134, and aspartate 246 together coordinate sn-glycerol 3-phosphate. Residues arginine 82, glutamate 83, tyrosine 134, aspartate 246, and glutamine 247 each contribute to the glycerol site. ADP-binding residues include threonine 268 and glycine 312. Positions 268, 312, 316, and 413 each coordinate ATP. The ADP site is built by glycine 413 and asparagine 417.

Belongs to the FGGY kinase family.

The catalysed reaction is glycerol + ATP = sn-glycerol 3-phosphate + ADP + H(+). It functions in the pathway polyol metabolism; glycerol degradation via glycerol kinase pathway; sn-glycerol 3-phosphate from glycerol: step 1/1. Inhibited by fructose 1,6-bisphosphate (FBP). Key enzyme in the regulation of glycerol uptake and metabolism. Catalyzes the phosphorylation of glycerol to yield sn-glycerol 3-phosphate. The polypeptide is Glycerol kinase (Saccharopolyspora erythraea (strain ATCC 11635 / DSM 40517 / JCM 4748 / NBRC 13426 / NCIMB 8594 / NRRL 2338)).